Reading from the N-terminus, the 397-residue chain is Acetate kinase (397 aa).

Residue asparagine 7 participates in Mg(2+) binding. Residue lysine 14 coordinates ATP. Arginine 90 contributes to the substrate binding site. Aspartate 147 acts as the Proton donor/acceptor in catalysis. Residues 207–211 (HLGNG), 282–284 (DFR), and 330–334 (GLGEN) contribute to the ATP site. Glutamate 383 lines the Mg(2+) pocket.

It belongs to the acetokinase family. Homodimer. Mg(2+) serves as cofactor. Mn(2+) is required as a cofactor.

The protein resides in the cytoplasm. It catalyses the reaction acetate + ATP = acetyl phosphate + ADP. Its pathway is metabolic intermediate biosynthesis; acetyl-CoA biosynthesis; acetyl-CoA from acetate: step 1/2. Its function is as follows. Catalyzes the formation of acetyl phosphate from acetate and ATP. Can also catalyze the reverse reaction. In Clostridium botulinum (strain 657 / Type Ba4), this protein is Acetate kinase.